A 366-amino-acid chain; its full sequence is Isocitrate dehydrogenase [NAD] subunit alpha, mitochondrial (366 aa).

The transit peptide at 1 to 27 (MAGSAWVSKVSRLLGAFHNTKQVTRGF) directs the protein to the mitochondrion. An N6-succinyllysine modification is found at Lys-77. Thr-101 is modified (phosphothreonine). Residues Arg-115, Arg-125, and Arg-146 each contribute to the substrate site. Residue Lys-223 is modified to N6-acetyllysine. Asp-233, Asp-257, and Asp-261 together coordinate Mg(2+). Lys-343 is subject to N6-acetyllysine; alternate. Lys-343 is subject to N6-succinyllysine; alternate. N6-succinyllysine is present on Lys-350.

It belongs to the isocitrate and isopropylmalate dehydrogenases family. Heterooligomer of subunits alpha (IDH3A), beta (IDH3B), and gamma (IDH3G) in the apparent ratio of 2:1:1. The heterodimer containing one IDH3A and one IDH3B subunit and the heterodimer containing one IDH3A and one IDH3G subunit assemble into a heterotetramer (which contains two subunits of IDH3A, one of IDH3B and one of IDH3G) and further into the heterooctamer. Requires Mg(2+) as cofactor. The cofactor is Mn(2+). In terms of tissue distribution, expressed in brown adipose tissue (BAT).

It is found in the mitochondrion. The catalysed reaction is D-threo-isocitrate + NAD(+) = 2-oxoglutarate + CO2 + NADH. The heterotetramer and the heterodimer composed of IDH3A and IDH3G subunits can be allosterically activated by citrate (CIT) or/and ADP, and the two activators can act independently or synergistically. The heterodimer composed of IDH3A and IDH3B subunits cannot be allosterically regulated and the allosteric regulation of the heterotetramer is through the IDH3G subunit and not the IDH3B subunit. The IDH3G subunit contains the allosteric site which consists of a CIT-binding site and an ADP-binding site, and the binding of CIT and ADP causes conformational changes at the allosteric site which are transmitted to the active site in the catalytic subunit (IDH3A) through a cascade of conformational changes at the heterodimer interface, leading to stabilization of the isocitrate-binding at the active site and thus activation of the enzyme. ATP can activate the heterotetramer and the heterodimer composed of IDH3A and IDH3G subunits at low concentrations but inhibits their activities at high concentrations, whereas ATP exhibits only inhibitory effect on the heterodimer composed of IDH3A and IDH3B subunits. Functionally, catalytic subunit of the enzyme which catalyzes the decarboxylation of isocitrate (ICT) into alpha-ketoglutarate. The heterodimer composed of the alpha (IDH3A) and beta (IDH3B) subunits and the heterodimer composed of the alpha (IDH3A) and gamma (IDH3G) subunits, have considerable basal activity but the full activity of the heterotetramer (containing two subunits of IDH3A, one of IDH3B and one of IDH3G) requires the assembly and cooperative function of both heterodimers. This is Isocitrate dehydrogenase [NAD] subunit alpha, mitochondrial from Rattus norvegicus (Rat).